We begin with the raw amino-acid sequence, 454 residues long: Bifunctional protein GlmU (454 aa).

The pyrophosphorylase stretch occupies residues methionine 1–arginine 226. Residues leucine 8–glycine 11, lysine 22, glutamine 73, glycine 78–threonine 79, tyrosine 100–aspartate 102, glycine 137, glutamate 151, asparagine 166, and asparagine 224 contribute to the UDP-N-acetyl-alpha-D-glucosamine site. Aspartate 102 contacts Mg(2+). Residue asparagine 224 participates in Mg(2+) binding. Positions valine 227 to glutamate 247 are linker. The N-acetyltransferase stretch occupies residues glycine 248–lysine 454. UDP-N-acetyl-alpha-D-glucosamine contacts are provided by arginine 330 and lysine 348. The Proton acceptor role is filled by histidine 360. Positions 363 and 374 each coordinate UDP-N-acetyl-alpha-D-glucosamine. Acetyl-CoA-binding positions include alanine 377, asparagine 383–tyrosine 384, serine 402, alanine 420, and arginine 437.

The protein in the N-terminal section; belongs to the N-acetylglucosamine-1-phosphate uridyltransferase family. It in the C-terminal section; belongs to the transferase hexapeptide repeat family. As to quaternary structure, homotrimer. Mg(2+) serves as cofactor.

It is found in the cytoplasm. The catalysed reaction is alpha-D-glucosamine 1-phosphate + acetyl-CoA = N-acetyl-alpha-D-glucosamine 1-phosphate + CoA + H(+). It catalyses the reaction N-acetyl-alpha-D-glucosamine 1-phosphate + UTP + H(+) = UDP-N-acetyl-alpha-D-glucosamine + diphosphate. Its pathway is nucleotide-sugar biosynthesis; UDP-N-acetyl-alpha-D-glucosamine biosynthesis; N-acetyl-alpha-D-glucosamine 1-phosphate from alpha-D-glucosamine 6-phosphate (route II): step 2/2. It participates in nucleotide-sugar biosynthesis; UDP-N-acetyl-alpha-D-glucosamine biosynthesis; UDP-N-acetyl-alpha-D-glucosamine from N-acetyl-alpha-D-glucosamine 1-phosphate: step 1/1. The protein operates within bacterial outer membrane biogenesis; LPS lipid A biosynthesis. In terms of biological role, catalyzes the last two sequential reactions in the de novo biosynthetic pathway for UDP-N-acetylglucosamine (UDP-GlcNAc). The C-terminal domain catalyzes the transfer of acetyl group from acetyl coenzyme A to glucosamine-1-phosphate (GlcN-1-P) to produce N-acetylglucosamine-1-phosphate (GlcNAc-1-P), which is converted into UDP-GlcNAc by the transfer of uridine 5-monophosphate (from uridine 5-triphosphate), a reaction catalyzed by the N-terminal domain. In Shewanella pealeana (strain ATCC 700345 / ANG-SQ1), this protein is Bifunctional protein GlmU.